The chain runs to 213 residues: MELHVLNHPLIEHKLTVLRDKNTPSSTFRELVSELVSLEAYEATRNLEVVDKPIETPVAPMVGKQIAKPRPIIVPVLRAGLGMLDGMTRMMPSAEVGFLGMKRDEEHPTQQITYANRLPDDLSGRQCFLIDPMLATGGTLVTATHYLMDKGAKDVTAICIIAAPEGIKFVEENIREDINFRVVVCGVDEGLNGKSYIVPGLGDAGDRLYGVID.

5-phospho-alpha-D-ribose 1-diphosphate-binding positions include Arg78, Arg103, and 131-139 (DPMLATGGT). Uracil is bound by residues Ile197 and 202 to 204 (GDA). Position 203 (Asp203) interacts with 5-phospho-alpha-D-ribose 1-diphosphate.

It belongs to the UPRTase family. Mg(2+) is required as a cofactor.

It carries out the reaction UMP + diphosphate = 5-phospho-alpha-D-ribose 1-diphosphate + uracil. The protein operates within pyrimidine metabolism; UMP biosynthesis via salvage pathway; UMP from uracil: step 1/1. Allosterically activated by GTP. Catalyzes the conversion of uracil and 5-phospho-alpha-D-ribose 1-diphosphate (PRPP) to UMP and diphosphate. The polypeptide is Uracil phosphoribosyltransferase (Bifidobacterium animalis subsp. lactis (strain AD011)).